The sequence spans 437 residues: Purple acid phosphatase 18 (437 aa).

The first 23 residues, 1-23 (MEKWGILLLVTLSVSIIFTSAAA), serve as a signal peptide directing secretion. Fe cation is bound by residues D148, D175, and Y178. Zn(2+) is bound at residue D175. Positions 208 and 291 each coordinate Zn(2+). Substrate is bound at residue N208. H301 (proton donor) is an active-site residue. Zn(2+) is bound at residue H328. 328–330 (HVH) contributes to the substrate binding site. H330 provides a ligand contact to Fe cation. N-linked (GlcNAc...) asparagine glycosylation is present at N390.

The protein belongs to the metallophosphoesterase superfamily. Purple acid phosphatase family. As to quaternary structure, homodimer. Fe cation serves as cofactor. The cofactor is Zn(2+). In terms of tissue distribution, expressed in roots, stems, leaves, flowers and siliques.

It localises to the secreted. The enzyme catalyses a phosphate monoester + H2O = an alcohol + phosphate. In Arabidopsis thaliana (Mouse-ear cress), this protein is Purple acid phosphatase 18 (PAP18).